The primary structure comprises 112 residues: Cell cycle protein GpsB (112 aa).

Positions 42–77 (YQKMADMNNEVVKLSEENNKLKKEVEELRLRVATSR) form a coiled coil. The disordered stretch occupies residues 75-97 (TSRPSDNKSFSSNNSSSSNNNVD). Positions 81 to 95 (NKSFSSNNSSSSNNN) are enriched in low complexity.

This sequence belongs to the GpsB family. Forms polymers through the coiled coil domains. Interacts with PBP1, MreC and EzrA.

The protein localises to the cytoplasm. In terms of biological role, divisome component that associates with the complex late in its assembly, after the Z-ring is formed, and is dependent on DivIC and PBP2B for its recruitment to the divisome. Together with EzrA, is a key component of the system that regulates PBP1 localization during cell cycle progression. Its main role could be the removal of PBP1 from the cell pole after pole maturation is completed. Also contributes to the recruitment of PBP1 to the division complex. Not essential for septum formation. The chain is Cell cycle protein GpsB from Staphylococcus haemolyticus (strain JCSC1435).